A 23-amino-acid polypeptide reads, in one-letter code: Basic phospholipase A2 Smb-N6 (23 aa).

It belongs to the phospholipase A2 family. Group II subfamily. Ca(2+) is required as a cofactor. Post-translationally, contains 7 disulfide bonds. In terms of tissue distribution, expressed by the venom gland.

The protein resides in the secreted. The enzyme catalyses a 1,2-diacyl-sn-glycero-3-phosphocholine + H2O = a 1-acyl-sn-glycero-3-phosphocholine + a fatty acid + H(+). Functionally, snake venom phospholipase A2 (PLA2) that shows myotoxic activities. PLA2 catalyzes the calcium-dependent hydrolysis of the 2-acyl groups in 3-sn-phosphoglycerides. This chain is Basic phospholipase A2 Smb-N6, found in Sistrurus miliarius barbouri (Dusky pigmy rattlesnake).